A 57-amino-acid polypeptide reads, in one-letter code: Small ribosomal subunit protein bS21 (57 aa).

The segment at 31-57 is disordered; it reads EVRKRKHYEKPSVRRKKKSEAARKRKF. Positions 33–57 are enriched in basic residues; the sequence is RKRKHYEKPSVRRKKKSEAARKRKF.

Belongs to the bacterial ribosomal protein bS21 family.

The sequence is that of Small ribosomal subunit protein bS21 (rpsU) from Halalkalibacterium halodurans (strain ATCC BAA-125 / DSM 18197 / FERM 7344 / JCM 9153 / C-125) (Bacillus halodurans).